Reading from the N-terminus, the 321-residue chain is ATP-dependent 6-phosphofructokinase (321 aa).

Gly12 is a binding site for ATP. ADP is bound by residues 22–26 (RGVVR) and 55–60 (RYSVSD). Residues 73–74 (RF) and 103–106 (GDGS) each bind ATP. A Mg(2+)-binding site is contributed by Asp104. Position 127–129 (127–129 (TID)) interacts with substrate. The active-site Proton acceptor is the Asp129. Arg156 serves as a coordination point for ADP. Substrate is bound by residues Arg164 and 171 to 173 (MGR). Residues 187–189 (GCE), Arg213, and 215–217 (KRH) each bind ADP. Residues Glu224, Arg245, and 251 to 254 (HIQR) contribute to the substrate site.

This sequence belongs to the phosphofructokinase type A (PFKA) family. ATP-dependent PFK group I subfamily. Prokaryotic clade 'B1' sub-subfamily. Homotetramer. It depends on Mg(2+) as a cofactor.

The protein resides in the cytoplasm. It carries out the reaction beta-D-fructose 6-phosphate + ATP = beta-D-fructose 1,6-bisphosphate + ADP + H(+). The protein operates within carbohydrate degradation; glycolysis; D-glyceraldehyde 3-phosphate and glycerone phosphate from D-glucose: step 3/4. Its activity is regulated as follows. Allosterically activated by ADP and other diphosphonucleosides, and allosterically inhibited by phosphoenolpyruvate. Its function is as follows. Catalyzes the phosphorylation of D-fructose 6-phosphate to fructose 1,6-bisphosphate by ATP, the first committing step of glycolysis. This is ATP-dependent 6-phosphofructokinase from Haemophilus influenzae (strain PittEE).